Reading from the N-terminus, the 76-residue chain is UPF0291 protein Aflv_1503 (76 aa).

Residues 56 to 76 (DPNGNDVTPQKLKDSKKKRLH) are disordered.

This sequence belongs to the UPF0291 family.

It is found in the cytoplasm. The protein is UPF0291 protein Aflv_1503 of Anoxybacillus flavithermus (strain DSM 21510 / WK1).